Here is a 1231-residue protein sequence, read N- to C-terminus: Complement factor H (1231 aa).

Positions methionine 1 to alanine 18 are cleaved as a signal peptide. Sushi domains follow at residues glutamate 19–lysine 82, arginine 83–valine 143, valine 144–glutamate 207, isoleucine 208–glutamate 264, lysine 265–leucine 322, proline 324–leucine 386, arginine 387–arginine 444, lysine 446–lysine 507, methionine 515–glutamate 566, arginine 567–glutamate 625, glutamine 628–valine 686, serine 689–alanine 746, lysine 751–methionine 805, glutamine 809–glutamate 866, isoleucine 868–glycine 928, leucine 929–lysine 986, threonine 987–aspartate 1045, threonine 1046–aspartate 1104, glycine 1107–histidine 1165, and serine 1170–lysine 1230. 40 cysteine pairs are disulfide-bonded: cysteine 21–cysteine 66, cysteine 52–cysteine 80, cysteine 85–cysteine 129, cysteine 114–cysteine 141, cysteine 146–cysteine 192, cysteine 178–cysteine 205, cysteine 210–cysteine 251, cysteine 237–cysteine 262, cysteine 267–cysteine 309, cysteine 294–cysteine 320, cysteine 325–cysteine 374, cysteine 357–cysteine 385, cysteine 389–cysteine 431, cysteine 416–cysteine 442, cysteine 448–cysteine 494, cysteine 477–cysteine 505, cysteine 509–cysteine 553, cysteine 536–cysteine 564, cysteine 569–cysteine 611, cysteine 597–cysteine 623, cysteine 630–cysteine 673, cysteine 659–cysteine 684, cysteine 691–cysteine 733, cysteine 719–cysteine 744, cysteine 753–cysteine 792, cysteine 781–cysteine 803, cysteine 811–cysteine 853, cysteine 839–cysteine 864, cysteine 870–cysteine 915, cysteine 901–cysteine 926, cysteine 931–cysteine 973, cysteine 959–cysteine 984, cysteine 989–cysteine 1032, cysteine 1018–cysteine 1043, cysteine 1048–cysteine 1091, cysteine 1077–cysteine 1102, cysteine 1109–cysteine 1152, cysteine 1138–cysteine 1163, cysteine 1167–cysteine 1218, and cysteine 1201–cysteine 1228. Asparagine 217 carries an N-linked (GlcNAc...) (complex) asparagine glycan. Asparagine 529 carries an N-linked (GlcNAc...) asparagine glycan. The N-linked (GlcNAc...) asparagine glycan is linked to asparagine 718. N-linked (GlcNAc...) asparagine glycans are attached at residues asparagine 802 and asparagine 822. Asparagine 882 and asparagine 911 each carry an N-linked (GlcNAc...) (complex) asparagine glycan. Residue asparagine 1029 is glycosylated (N-linked (GlcNAc...) (complex) asparagine). The N-linked (GlcNAc...) asparagine glycan is linked to asparagine 1095.

Homodimer. Also forms homooligomers. Interacts with complement protein C3b; this interaction inhibits complement activation. Interacts with complement protein C3d. Interacts with CR3/ITGAM; this interaction mediates adhesion of neutrophils to pathogens leading to pathogen clearance. Interacts with complement factor I. In terms of assembly, (Microbial infection) Interacts with West nile virus non-structural protein 1 (NS1); this interaction leads to the degradation of C3. As to quaternary structure, (Microbial infection) Interacts with C.albicans GPD2; the interaction is direct and leads to the degradation of C3 which enables the pathogen to evade the host innate immune system. (Microbial infection) Interacts with Neisseria meningitidis protein fHbp. In terms of assembly, (Microbial infection) Interacts with Borrelia burgdorferi outer surface protein E/OspE; this interaction recruits complement regulator factor H onto the bacterial surface to evade complement-mediated cell lysis. As to quaternary structure, (Microbial infection) Interacts with Streptococcus pneumoniae protein virulence factor choline-binding protein A/CbpAN; this interaction enables Streptococcus pneumoniae to evade surveillance by human complement system. (Microbial infection) Interacts with Staphylococcus aureus surface protein serine-aspartate repeat protein E/SdrE; this interaction sequesters CFH on the surface of S.aureus for complement evasion. In terms of assembly, (Microbial infection) Interacts with Staphylococcus aureus protein Sbi; this interaction inhibits the complement activation of the alternative pathway. As to quaternary structure, (Microbial infection) Interacts (via sushi 4-6 domains) with P.falciparum surface protein PF92; the interaction recruits CFH onto the merozoite surface preventing complement-mediated cell lysis. The interaction does not affect CFH activity. Interacts (via sushi 6-7 domains) with P.falciparum (strain NF54) GAP50; the interaction occurs in the vector mosquito midgut at the surface of the activated parasite gametocytes; the interaction protects the parasite from alternative complement pathway-mediated elimination. (Microbial infection) Interacts (via sushi 4-6 domains) with P.falciparum surface protein PF92; the interaction recruits FHL-1 isoform onto the merozoite surface preventing complement-mediated cell lysis. The interaction does not affect FHL-1 isoform activity. Interacts (via sushi 6-7 domains) with P.falciparum (strain NF54) GAP50; the interaction occurs in the vector mosquito midgut at the surface of the activated parasite gametocytes; the interaction protects the parasite from alternative complement pathway-mediated elimination. Sulfated on tyrosine residues. Post-translationally, according to a report, Asn-217 is not glycosylated. Another study observed glycosylation at this position. Expressed in the retinal pigment epithelium (at protein level). CFH is one of the most abundant complement components in blood where the liver is the major source of CFH protein in vivo. in addition, CFH is secreted by additional cell types including monocytes, fibroblasts, or endothelial cells.

The protein localises to the secreted. In terms of biological role, glycoprotein that plays an essential role in maintaining a well-balanced immune response by modulating complement activation. Acts as a soluble inhibitor of complement, where its binding to self markers such as glycan structures prevents complement activation and amplification on cell surfaces. Accelerates the decay of the complement alternative pathway (AP) C3 convertase C3bBb, thus preventing local formation of more C3b, the central player of the complement amplification loop. As a cofactor of the serine protease factor I, CFH also regulates proteolytic degradation of already-deposited C3b. In addition, mediates several cellular responses through interaction with specific receptors. For example, interacts with CR3/ITGAM receptor and thereby mediates the adhesion of human neutrophils to different pathogens. In turn, these pathogens are phagocytosed and destroyed. (Microbial infection) In the mosquito midgut, binds to the surface of parasite P.falciparum gametocytes and protects the parasite from alternative complement pathway-mediated elimination. The protein is Complement factor H (CFH) of Homo sapiens (Human).